The sequence spans 1311 residues: DENN domain-containing protein 5B (1311 aa).

One can recognise a uDENN domain in the interval 53–270 (ATAAGENFDQ…EVPLPASGRS (218 aa)). The segment covering 154 to 165 (QAEHNTSAQNCT) has biased composition (polar residues). The disordered stretch occupies residues 154–201 (QAEHNTSAQNCTSSSSSSSSSSSSSSMDSLSSSLDDVDSPSAHGGRRT). Low complexity predominate over residues 166–187 (SSSSSSSSSSSSSSMDSLSSSL). In terms of domain architecture, cDENN spans 289 to 452 (ELPLADFPLA…AVMSLQTSVL (164 aa)). The region spanning 454-619 (KELKSTSLRE…DNKIMSQWEE (166 aa)) is the dDENN domain. Positions 809 to 969 (LEENTLIASL…DYFCFTSVFT (161 aa)) constitute an RUN 1 domain. The tract at residues 854-874 (EQQLESPVSNGQERRKTESSV) is disordered. The chain crosses the membrane as a helical span at residues 962 to 982 (FCFTSVFTTIMIPYRAVIIPI). The region spanning 973–1081 (IPYRAVIIPI…DDGSLERVLI (109 aa)) is the PLAT domain. The RUN 2 domain occupies 1155–1306 (TVLLCGEGGL…FPITLETSLT (152 aa)).

This sequence belongs to the RAB6IP1 family.

It is found in the membrane. Guanine nucleotide exchange factor (GEF) which may activate the small GTPases Rab. May promote the exchange of GDP to GTP, converting inactive GDP-bound Rab proteins into their active GTP-bound form. This chain is DENN domain-containing protein 5B (dennd5b), found in Danio rerio (Zebrafish).